Here is a 166-residue protein sequence, read N- to C-terminus: Small ribosomal subunit protein uS5 (166 aa).

Positions 10 to 73 (QIEKLISLNR…TSARKNLRFV (64 aa)) constitute an S5 DRBM domain.

This sequence belongs to the universal ribosomal protein uS5 family. In terms of assembly, part of the 30S ribosomal subunit. Contacts proteins S4 and S8.

Functionally, with S4 and S12 plays an important role in translational accuracy. In terms of biological role, located at the back of the 30S subunit body where it stabilizes the conformation of the head with respect to the body. This is Small ribosomal subunit protein uS5 from Borrelia garinii subsp. bavariensis (strain ATCC BAA-2496 / DSM 23469 / PBi) (Borreliella bavariensis).